The primary structure comprises 459 residues: Xylose/arabinose-binding protein XacG (459 aa).

A helical transmembrane segment spans residues 19-36; the sequence is ALTVGAAAGIAGCTGGGG. Residues 27-68 form a disordered region; it reads GIAGCTGGGGTETESTESGNGNGSGGSTDDTETSGSSSGESW.

It belongs to the bacterial solute-binding protein 1 family. As to quaternary structure, the complex is composed of two ATP-binding proteins (XacJ and XacK), two transmembrane proteins (XacH and XacI) and a solute-binding protein (XacG).

The protein resides in the cell membrane. Its function is as follows. Part of the ABC transporter complex XacGHIJK involved in the uptake of xylose and arabinose. The sequence is that of Xylose/arabinose-binding protein XacG from Haloferax volcanii (strain ATCC 29605 / DSM 3757 / JCM 8879 / NBRC 14742 / NCIMB 2012 / VKM B-1768 / DS2) (Halobacterium volcanii).